Reading from the N-terminus, the 457-residue chain is tRNA-2-methylthio-N(6)-dimethylallyladenosine synthase (457 aa).

In terms of domain architecture, MTTase N-terminal spans 3–120 (KKVYVKTFGC…LPQMIDARRA (118 aa)). 6 residues coordinate [4Fe-4S] cluster: Cys12, Cys49, Cys83, Cys157, Cys161, and Cys164. The 235-residue stretch at 143-377 (RVEGPSAFVS…QATIEENVAR (235 aa)) folds into the Radical SAM core domain. Positions 380-447 (QSMVGKVERI…PHSLRGELLL (68 aa)) constitute a TRAM domain.

This sequence belongs to the methylthiotransferase family. MiaB subfamily. In terms of assembly, monomer. It depends on [4Fe-4S] cluster as a cofactor.

The protein localises to the cytoplasm. The catalysed reaction is N(6)-dimethylallyladenosine(37) in tRNA + (sulfur carrier)-SH + AH2 + 2 S-adenosyl-L-methionine = 2-methylsulfanyl-N(6)-dimethylallyladenosine(37) in tRNA + (sulfur carrier)-H + 5'-deoxyadenosine + L-methionine + A + S-adenosyl-L-homocysteine + 2 H(+). In terms of biological role, catalyzes the methylthiolation of N6-(dimethylallyl)adenosine (i(6)A), leading to the formation of 2-methylthio-N6-(dimethylallyl)adenosine (ms(2)i(6)A) at position 37 in tRNAs that read codons beginning with uridine. In Burkholderia vietnamiensis (strain G4 / LMG 22486) (Burkholderia cepacia (strain R1808)), this protein is tRNA-2-methylthio-N(6)-dimethylallyladenosine synthase.